A 1406-amino-acid polypeptide reads, in one-letter code: DNA-directed RNA polymerase subunit beta' (1406 aa).

Positions 72, 74, 87, and 90 each coordinate Zn(2+). Mg(2+) is bound by residues aspartate 462, aspartate 464, and aspartate 466. 4 residues coordinate Zn(2+): cysteine 816, cysteine 891, cysteine 898, and cysteine 901.

The protein belongs to the RNA polymerase beta' chain family. As to quaternary structure, the RNAP catalytic core consists of 2 alpha, 1 beta, 1 beta' and 1 omega subunit. When a sigma factor is associated with the core the holoenzyme is formed, which can initiate transcription. It depends on Mg(2+) as a cofactor. Zn(2+) serves as cofactor.

It carries out the reaction RNA(n) + a ribonucleoside 5'-triphosphate = RNA(n+1) + diphosphate. In terms of biological role, DNA-dependent RNA polymerase catalyzes the transcription of DNA into RNA using the four ribonucleoside triphosphates as substrates. The polypeptide is DNA-directed RNA polymerase subunit beta' (Psychrobacter arcticus (strain DSM 17307 / VKM B-2377 / 273-4)).